Here is a 31-residue protein sequence, read N- to C-terminus: Cytochrome b6-f complex subunit 6 (31 aa).

A helical membrane pass occupies residues 4 to 26 (ITSYFGFLLAASTITPALLIGLS).

Belongs to the PetL family. In terms of assembly, the 4 large subunits of the cytochrome b6-f complex are cytochrome b6, subunit IV (17 kDa polypeptide, PetD), cytochrome f and the Rieske protein, while the 4 small subunits are PetG, PetL, PetM and PetN. The complex functions as a dimer.

It localises to the plastid. It is found in the chloroplast thylakoid membrane. Component of the cytochrome b6-f complex, which mediates electron transfer between photosystem II (PSII) and photosystem I (PSI), cyclic electron flow around PSI, and state transitions. PetL is important for photoautotrophic growth as well as for electron transfer efficiency and stability of the cytochrome b6-f complex. The polypeptide is Cytochrome b6-f complex subunit 6 (Liriodendron tulipifera (Tuliptree)).